A 248-amino-acid chain; its full sequence is Anamorsin homolog (248 aa).

The interval 4–129 is N-terminal SAM-like domain; it reads FKGLQKSLYI…ETGSSARLSF (126 aa). A linker region spans residues 130–161; that stretch reads AKKNASAVNVWKISGDDEELIDEEELLDEEDK. 4 residues coordinate [2Fe-2S] cluster: cysteine 172, cysteine 181, cysteine 184, and cysteine 186. Residues 172–186 form a fe-S binding site A region; that stretch reads CSTTGKRKACKNCSC. Cysteine 209, cysteine 212, cysteine 220, and cysteine 223 together coordinate [4Fe-4S] cluster. Short sequence motifs (cx2C motif) lie at residues 209 to 212 and 220 to 223; these read CGNC and CSTC. The interval 209–223 is fe-S binding site B; it reads CGNCYLGDAFRCSTC.

The protein belongs to the anamorsin family. In terms of assembly, monomer. The cofactor is [2Fe-2S] cluster. [4Fe-4S] cluster is required as a cofactor.

The protein localises to the cytoplasm. It is found in the mitochondrion intermembrane space. Component of the cytosolic iron-sulfur (Fe-S) protein assembly (CIA) machinery. Required for the maturation of extramitochondrial Fe-S proteins. Part of an electron transfer chain functioning in an early step of cytosolic Fe-S biogenesis, facilitating the de novo assembly of a [4Fe-4S] cluster on the cytosolic Fe-S scaffold complex. Electrons are transferred from NADPH via a FAD- and FMN-containing diflavin oxidoreductase. Together with the diflavin oxidoreductase, also required for the assembly of the diferric tyrosyl radical cofactor of ribonucleotide reductase (RNR), probably by providing electrons for reduction during radical cofactor maturation in the catalytic small subunit. The sequence is that of Anamorsin homolog from Drosophila melanogaster (Fruit fly).